A 360-amino-acid polypeptide reads, in one-letter code: Serine/threonine-protein kinase SRK2H (360 aa).

One can recognise a Protein kinase domain in the interval Tyr-4–Tyr-260. ATP contacts are provided by residues Leu-10–Ala-18 and Lys-33. Residue Asp-123 is the Proton acceptor of the active site. The tract at residues Glu-298–Ala-360 is disordered. Residues Asp-313–Glu-343 are compositionally biased toward acidic residues. Over residues Tyr-344 to Ala-360 the composition is skewed to basic and acidic residues.

The protein belongs to the protein kinase superfamily. Ser/Thr protein kinase family. Expressed in seedlings.

It carries out the reaction L-seryl-[protein] + ATP = O-phospho-L-seryl-[protein] + ADP + H(+). It catalyses the reaction L-threonyl-[protein] + ATP = O-phospho-L-threonyl-[protein] + ADP + H(+). The polypeptide is Serine/threonine-protein kinase SRK2H (SRK2H) (Arabidopsis thaliana (Mouse-ear cress)).